Reading from the N-terminus, the 162-residue chain is Nucleotide-binding protein SCO4614 (162 aa).

This sequence belongs to the YajQ family.

Its subcellular location is the cytoplasm. It is found in the nucleoid. In terms of biological role, nucleotide-binding protein. In Streptomyces coelicolor (strain ATCC BAA-471 / A3(2) / M145), this protein is Nucleotide-binding protein SCO4614.